A 398-amino-acid chain; its full sequence is Acetate kinase (398 aa).

Residue Asn10 coordinates Mg(2+). An ATP-binding site is contributed by Lys17. A substrate-binding site is contributed by Arg89. Residue Asp148 is the Proton donor/acceptor of the active site. ATP-binding positions include 208–212 (HLGNG), 283–285 (DCR), and 331–335 (GIGEN). Glu385 lines the Mg(2+) pocket.

Belongs to the acetokinase family. As to quaternary structure, homodimer. The cofactor is Mg(2+). Mn(2+) is required as a cofactor.

The protein localises to the cytoplasm. The catalysed reaction is acetate + ATP = acetyl phosphate + ADP. The protein operates within metabolic intermediate biosynthesis; acetyl-CoA biosynthesis; acetyl-CoA from acetate: step 1/2. Functionally, catalyzes the formation of acetyl phosphate from acetate and ATP. Can also catalyze the reverse reaction. The protein is Acetate kinase of Histophilus somni (strain 129Pt) (Haemophilus somnus).